Reading from the N-terminus, the 1793-residue chain is uncharacterized protein (1793 aa).

Disordered stretches follow at residues 156–189, 204–362, and 407–505; these read ARQA…ASSQ, QRES…PPKV, and ASFG…SGAA. A compositionally biased stretch (polar residues) spans 166-175; it reads SSAQDSQELK. Residues 227-237 are compositionally biased toward basic and acidic residues; that stretch reads SPKEKAQDEPS. Residues 238 to 247 are compositionally biased toward polar residues; the sequence is SKTPSPQNNP. The span at 248–258 shows a compositional bias: low complexity; it reads ASSQLSRSQHS. Residues 277-288 are compositionally biased toward basic and acidic residues; sequence KAEEDGLSKMED. Residues 289-307 are compositionally biased toward low complexity; the sequence is STTSTGALATSSSSLGFES. The segment covering 317–342 has biased composition (gly residues); the sequence is AVGGEGEKISGGGGGGKGGGGGGAGD. The span at 434–450 shows a compositional bias: low complexity; that stretch reads STTPSTNTTRTPSPTSS. Residues 463-476 are compositionally biased toward polar residues; it reads DTSSTEVGSGPSDS. A compositionally biased stretch (low complexity) spans 485–505; that stretch reads PGTAPLTEPLPETPEAASGAA. A Phosphothreonine modification is found at threonine 733. Disordered stretches follow at residues 757-809, 829-917, 1090-1147, 1161-1187, 1229-1249, 1408-1465, and 1482-1567; these read RSES…SKFA, MERG…FTDG, RDIR…GSGS, QRED…NSSS, QKTP…ATKP, TGGV…KSNS, and GELL…PLPF. 2 stretches are compositionally biased toward basic and acidic residues: residues 829-839 and 846-872; these read MERGEVMDTSH and KETE…HSEA. Residues 1113 to 1123 show a composition bias toward low complexity; that stretch reads KGSGDSSDKGS. The span at 1161–1174 shows a compositional bias: basic and acidic residues; sequence QREDSMDREPRESM. Serine 1187 carries the post-translational modification Phosphoserine. Basic and acidic residues predominate over residues 1231–1246; it reads TPEKLKEEEVKEEGKA. Residues 1513–1528 are compositionally biased toward low complexity; it reads SQVPSSSKGSQVSGTS. Residues 1546-1555 are compositionally biased toward pro residues; that stretch reads PPGPQSPEHP. At arginine 1774 the chain carries Omega-N-methylarginine.

Expressed in muscle, heart, kidney and liver but barely detectable in lung, pancreas and brain. In liver veins, expressed in hepatic vein, extrahepatic portal vein and intrahepatic portal vein.

This is an uncharacterized protein from Homo sapiens (Human).